We begin with the raw amino-acid sequence, 533 residues long: CTP synthase (533 aa).

The amidoligase domain stretch occupies residues 1–269 (MKKNLKILVI…HEILSSKLNI (269 aa)). Residue S16 coordinates CTP. S16 lines the UTP pocket. ATP is bound by residues 17 to 22 (GIGKGV) and D73. The Mg(2+) site is built by D73 and E143. Residues 150 to 152 (DME), 190 to 195 (KSKPTQ), and K226 each bind CTP. Residues 190-195 (KSKPTQ) and K226 contribute to the UTP site. Residues 304 to 533 (YAELDDSYAS…LFLGLIKACI (230 aa)) form the Glutamine amidotransferase type-1 domain. L-glutamine is bound at residue G355. C382 acts as the Nucleophile; for glutamine hydrolysis in catalysis. L-glutamine contacts are provided by residues 383–386 (LGLQ), E406, and R466. Catalysis depends on residues H511 and E513.

This sequence belongs to the CTP synthase family. Homotetramer.

The enzyme catalyses UTP + L-glutamine + ATP + H2O = CTP + L-glutamate + ADP + phosphate + 2 H(+). The catalysed reaction is L-glutamine + H2O = L-glutamate + NH4(+). It carries out the reaction UTP + NH4(+) + ATP = CTP + ADP + phosphate + 2 H(+). It functions in the pathway pyrimidine metabolism; CTP biosynthesis via de novo pathway; CTP from UDP: step 2/2. Allosterically activated by GTP, when glutamine is the substrate; GTP has no effect on the reaction when ammonia is the substrate. The allosteric effector GTP functions by stabilizing the protein conformation that binds the tetrahedral intermediate(s) formed during glutamine hydrolysis. Inhibited by the product CTP, via allosteric rather than competitive inhibition. Its function is as follows. Catalyzes the ATP-dependent amination of UTP to CTP with either L-glutamine or ammonia as the source of nitrogen. Regulates intracellular CTP levels through interactions with the four ribonucleotide triphosphates. This Borreliella afzelii (strain PKo) (Borrelia afzelii) protein is CTP synthase.